The chain runs to 436 residues: 3-ketoacyl-CoA thiolase (436 aa).

Cys-99 (acyl-thioester intermediate) is an active-site residue. Residues His-392 and Cys-422 each act as proton acceptor in the active site.

It belongs to the thiolase-like superfamily. Thiolase family. In terms of assembly, heterotetramer of two alpha chains (FadJ) and two beta chains (FadI).

Its subcellular location is the cytoplasm. The catalysed reaction is an acyl-CoA + acetyl-CoA = a 3-oxoacyl-CoA + CoA. It functions in the pathway lipid metabolism; fatty acid beta-oxidation. Its function is as follows. Catalyzes the final step of fatty acid oxidation in which acetyl-CoA is released and the CoA ester of a fatty acid two carbons shorter is formed. The polypeptide is 3-ketoacyl-CoA thiolase (Yersinia enterocolitica serotype O:8 / biotype 1B (strain NCTC 13174 / 8081)).